The sequence spans 323 residues: MSKYLRTSHPSPLICRPILTFSSLHILTAFLISGNSSYINWSVTIILLILGLYACHRFLNMKKLTRDAQEPLLPHIRPSTRNKIRKYIYGTIFILSIFLLYRSLNSPDTSKHGIGRNGDFIEYEPKAGPTIKEPVENIVKLDVYMEAQCPDTSRFFRQQLKKAWDILGRLNRIELNVIPFGKARCTEKGNDFECQCQHGPTECQINQLMNCVIDRFGFPHRYLPGVLCMQGKYSLDEAMKCVTENYPSEYERMRECASGTRGRRLLALSGQKTASLTPAIDFIPWIVINGSRNSDALYDLTQNVCEAMQPMPSACKDYLRSLQ.

Residues 13–32 (LICRPILTFSSLHILTAFLI) traverse the membrane as a helical segment. An N-linked (GlcNAc...) asparagine glycan is attached at Asn-35. The next 2 membrane-spanning stretches (helical) occupy residues 37 to 59 (SYIN…HRFL) and 87 to 104 (YIYG…YRSL). An N-linked (GlcNAc...) asparagine glycan is attached at Asn-289.

Belongs to the GILT family.

It is found in the membrane. In Caenorhabditis elegans, this protein is GILT-like protein C02D5.2.